The sequence spans 256 residues: Leucine-rich repeat-containing protein 18 (256 aa).

LRR repeat units lie at residues 28–49 (GRKR…ILRL), 51–72 (EIDE…ISKF), 74–95 (NLRW…IGQM), 97–118 (SLLF…VELN), 122–144 (NIRT…GALK), 145–167 (ELHE…SKLP), 168–189 (KLKK…DMFV), and 194–215 (RLEN…QKCQ).

It is found in the cytoplasm. In terms of biological role, may be involved in the regulation of spermatogenesis and sperm maturation. This is Leucine-rich repeat-containing protein 18 (Lrrc18) from Rattus norvegicus (Rat).